The following is a 405-amino-acid chain: Putative phosphate permease PYRAB14010 (405 aa).

11 helical membrane passes run 3-23 (MDPW…AIGA), 44-64 (AVLI…KTVT), 82-102 (VLVY…VIAT), 114-134 (IIGG…VNWG), 138-158 (SVVL…FFIF), 181-201 (VWIG…VLHG), 207-227 (GVLK…SMIL), 264-284 (VANA…GMAG), 287-307 (VPVP…GVAT), 329-349 (FTID…GMPI), and 384-404 (FVTV…LWIV).

This sequence belongs to the inorganic phosphate transporter (PiT) (TC 2.A.20) family.

The protein resides in the cell membrane. Functionally, potential transporter for phosphate. This is Putative phosphate permease PYRAB14010 from Pyrococcus abyssi (strain GE5 / Orsay).